The following is a 254-amino-acid chain: Small ribosomal subunit protein uS5 (254 aa).

Positions 1-10 are enriched in polar residues; the sequence is MSAPEAQQQK. The disordered stretch occupies residues 1-34; that stretch reads MSAPEAQQQKRGGFGGRNRGRPNRRGPRNTEEKG. N-acetylserine is present on Ser-2. The residue at position 11 (Arg-11) is an Asymmetric dimethylarginine; by HMT1; alternate. Position 11 is an omega-N-methylarginine; by HMT1; alternate (Arg-11). Position 17 is an omega-N-methylarginine; by HMT1 (Arg-17). Over residues 18–27 the composition is skewed to basic residues; sequence NRGRPNRRGP. Lys-33 is covalently cross-linked (Glycyl lysine isopeptide (Lys-Gly) (interchain with G-Cter in ubiquitin)). The 64-residue stretch at 76–139 folds into the S5 DRBM domain; that stretch reads LQDEVMNIKP…IIAKLSVIPI (64 aa).

This sequence belongs to the universal ribosomal protein uS5 family. In terms of assembly, component of the small ribosomal subunit (SSU). Mature yeast ribosomes consist of a small (40S) and a large (60S) subunit. The 40S small subunit contains 1 molecule of ribosomal RNA (18S rRNA) and 33 different proteins (encoded by 57 genes). The large 60S subunit contains 3 rRNA molecules (25S, 5.8S and 5S rRNA) and 46 different proteins (encoded by 81 genes). Interacts with snoRNA U3. Interacts with MPP10. Component of the ribosomal small subunit (SSU) processome composed of at least 40 protein subunits and snoRNA U3. In terms of processing, N-terminally acetylated by acetyltransferase NatA.

The protein localises to the cytoplasm. It is found in the nucleus. Its subcellular location is the nucleolus. In terms of biological role, component of the ribosome, a large ribonucleoprotein complex responsible for the synthesis of proteins in the cell. The small ribosomal subunit (SSU) binds messenger RNAs (mRNAs) and translates the encoded message by selecting cognate aminoacyl-transfer RNA (tRNA) molecules. The large subunit (LSU) contains the ribosomal catalytic site termed the peptidyl transferase center (PTC), which catalyzes the formation of peptide bonds, thereby polymerizing the amino acids delivered by tRNAs into a polypeptide chain. The nascent polypeptides leave the ribosome through a tunnel in the LSU and interact with protein factors that function in enzymatic processing, targeting, and the membrane insertion of nascent chains at the exit of the ribosomal tunnel. uS5 is important for the assembly and function of the 40S ribosomal subunit. Mutations in this protein affects the control of translational fidelity. Involved in nucleolar processing of pre-18S ribosomal RNA and ribosome assembly. The protein is Small ribosomal subunit protein uS5 of Saccharomyces cerevisiae (strain ATCC 204508 / S288c) (Baker's yeast).